We begin with the raw amino-acid sequence, 627 residues long: Alpha-terpineol synthase, chloroplastic (627 aa).

The N-terminal 53 residues, 1–53, are a transit peptide targeting the chloroplast; it reads MAGITGVMNMKLAARPSSGRHSRGCRPAVVPSAGKQMLLVRRHPPGSASWPTR. Residues 13–90 form a disordered region; sequence AARPSSGRHS…EDRASRNTSS (78 aa). (2E)-geranyl diphosphate is bound by residues Arg-339, Asp-376, Asp-380, Arg-518, and Asp-521. Mg(2+) is bound by residues Asp-376 and Asp-380. A DDXXD motif motif is present at residues 376-380; that stretch reads DDTYD. Residues Asp-521, Ser-525, and Glu-529 each contribute to the Mg(2+) site.

The protein belongs to the terpene synthase family. Tpsb subfamily. As to quaternary structure, monomer. Mg(2+) is required as a cofactor. The cofactor is Mn(2+). Expressed in seedling leaf sheaths and roots.

It is found in the plastid. It localises to the chloroplast. The catalysed reaction is (2E)-geranyl diphosphate + H2O = (S)-alpha-terpineol + diphosphate. The enzyme catalyses (2E)-geranyl diphosphate = (4S)-limonene + diphosphate. It catalyses the reaction (2E)-geranyl diphosphate = gamma-terpinene + diphosphate. It carries out the reaction (2E)-geranyl diphosphate = beta-myrcene + diphosphate. The catalysed reaction is (2E)-geranyl diphosphate = terpinolene + diphosphate. The enzyme catalyses (2E)-geranyl diphosphate + H2O = 4-terpineol + diphosphate. Its pathway is secondary metabolite biosynthesis; terpenoid biosynthesis. Its function is as follows. Component of the volatile terpenes biosynthesis pathways. Mediates the synthesis of a blend of monoterpenes. Converts mainly geranyl diphosphate to alpha-terpineol. Also triggers the biosynthesis of minor monoterpenes including limonene, gamma-terpinene, beta-myrcene, terpinolene and 4-terpineol. This chain is Alpha-terpineol synthase, chloroplastic, found in Zea mays (Maize).